A 101-amino-acid polypeptide reads, in one-letter code: Small ribosomal subunit protein uS14 (101 aa).

The protein belongs to the universal ribosomal protein uS14 family. As to quaternary structure, part of the 30S ribosomal subunit. Contacts proteins S3 and S10.

Functionally, binds 16S rRNA, required for the assembly of 30S particles and may also be responsible for determining the conformation of the 16S rRNA at the A site. The polypeptide is Small ribosomal subunit protein uS14 (Gluconacetobacter diazotrophicus (strain ATCC 49037 / DSM 5601 / CCUG 37298 / CIP 103539 / LMG 7603 / PAl5)).